A 240-amino-acid polypeptide reads, in one-letter code: UDP-2,3-diacylglucosamine hydrolase (240 aa).

Mn(2+)-binding residues include Asp-8, His-10, Asp-41, Asn-79, and His-114. Substrate is bound at residue 79-80 (NR). Positions 122, 160, 164, 167, and 195 each coordinate substrate. Mn(2+) is bound by residues His-195 and His-197.

It belongs to the LpxH family. It depends on Mn(2+) as a cofactor.

The protein resides in the cell inner membrane. The enzyme catalyses UDP-2-N,3-O-bis[(3R)-3-hydroxytetradecanoyl]-alpha-D-glucosamine + H2O = 2-N,3-O-bis[(3R)-3-hydroxytetradecanoyl]-alpha-D-glucosaminyl 1-phosphate + UMP + 2 H(+). It participates in glycolipid biosynthesis; lipid IV(A) biosynthesis; lipid IV(A) from (3R)-3-hydroxytetradecanoyl-[acyl-carrier-protein] and UDP-N-acetyl-alpha-D-glucosamine: step 4/6. Hydrolyzes the pyrophosphate bond of UDP-2,3-diacylglucosamine to yield 2,3-diacylglucosamine 1-phosphate (lipid X) and UMP by catalyzing the attack of water at the alpha-P atom. Involved in the biosynthesis of lipid A, a phosphorylated glycolipid that anchors the lipopolysaccharide to the outer membrane of the cell. The polypeptide is UDP-2,3-diacylglucosamine hydrolase (Serratia proteamaculans (strain 568)).